The sequence spans 219 residues: Small ribosomal subunit protein uS3c (219 aa).

The 72-residue stretch at 47 to 118 folds into the KH type-2 domain; that stretch reads IKKNIRISSG…KINIAITRIT (72 aa).

The protein belongs to the universal ribosomal protein uS3 family. Part of the 30S ribosomal subunit.

The protein localises to the plastid. It is found in the chloroplast. In Citrus sinensis (Sweet orange), this protein is Small ribosomal subunit protein uS3c (rps3).